Consider the following 1017-residue polypeptide: MRVFLLCAYILLLMISQLRAVSFPEDDEPLNTVDYHYSRQYPVFRGRPSGNESQHRLDFQLMLKIRDTLYIAGRDQVYTVNLNEMPKTEVIPSKKLTWRSRQQDRENCAMKGKHKDECHNFIKVFVPRNDEMVFVCGTNAFNPMCRYYRLSTLEYDGEEISGLARCPFDARQTNVALFADGKLYSATVADFLASDAVIYRSMGDGSALRTIKYDSKWIKEPHFLHAIEYGNYVYFFFREIAVEHNNLGKAVYSRVARICKNDMGGSQRVLEKHWTSFLKARLNCSVPGDSFFYFDVLQSITDIIQINGIPTVVGVFTTQLNSIPGSAVCAFSMDDIEKVFKGRFKEQKTPDSVWTAVPEDKVPKPRPGCCAKHGLAEAYKTSIDFPDETLSFIKSHPLMDSAVPPIADEPWFTKTRVRYRLTAIAVDHSAGPYQNYTVIFVGSEAGVVLKVLAKTSPFSLNDSVLLEEIEAYNHAKCNAENEEDKKVISLQLDKNHHALYVAFSSCVIRIPLSRCERYGSCKKSCIASRDPYCGWLSQGSCGRVTPGMLAEGYEQDAEFGNTAHLGDCHEILPTSTTPDYKIFGGPTSGVRWEVQSGESNQMVHMNVLITCVFAAFVLGAFIAGVAVYCYRDMFVRKNRKIHKDAESAQSCTDSSGSFAKLNGLFDSPVKEYQQNIDSPKLYSNLLTSRKELPPNGDTKSMVMDHRGQPPELAALPTPESTPVLHQKTLQAMKSHSEKAHGHGASRKETPQFFPSSPPPHSPLSHGHIPSAIVLPNATHDYNTSFSNSNAHKAEKKLQNIDHPLTKSSSKRDHRRSVDSRNTLNDLLKHLNDPNSNPKAIMGDIQMAHQNLMLDPMGSMSEVPPKVPNREASLYSPPSTLPRNSPTKRVDVPTTPGVPMTSLGRQRGYHKNSSQRHSISAMPKNLNSPNGVLLSRQPSMNHGGYMPTPTGAKVDYIQGTPVSVHLQPSLSRQSSYTSNGTLPRTGLKRTPSLKPDVPPKPSFVPQTPSVRPLNKYTY.

An N-terminal signal peptide occupies residues 1 to 20 (MRVFLLCAYILLLMISQLRA). The Extracellular portion of the chain corresponds to 21-606 (VSFPEDDEPL…GESNQMVHMN (586 aa)). A Sema domain is found at 27–512 (DEPLNTVDYH…FSSCVIRIPL (486 aa)). Asparagine 51 carries an N-linked (GlcNAc...) asparagine glycan. 4 cysteine pairs are disulfide-bonded: cysteine 108–cysteine 118, cysteine 136–cysteine 145, cysteine 259–cysteine 370, and cysteine 284–cysteine 329. A glycan (N-linked (GlcNAc...) asparagine) is linked at asparagine 283. 2 N-linked (GlcNAc...) asparagine glycosylation sites follow: asparagine 435 and asparagine 461. Cystine bridges form between cysteine 477–cysteine 506, cysteine 515–cysteine 533, cysteine 521–cysteine 568, and cysteine 525–cysteine 541. Positions 514–569 (RCERYGSCKKSCIASRDPYCGWLSQGSCGRVTPGMLAEGYEQDAEFGNTAHLGDCH) constitute a PSI domain. The chain crosses the membrane as a helical span at residues 607 to 627 (VLITCVFAAFVLGAFIAGVAV). The Cytoplasmic segment spans residues 628 to 1017 (YCYRDMFVRK…SVRPLNKYTY (390 aa)). 3 positions are modified to phosphoserine: serine 667, serine 678, and serine 688. Disordered regions lie at residues 688–719 (SRKE…PTPE), 731–769 (AMKS…GHIP), 783–818 (TSFS…RSVD), and 873–912 (LYSP…HKNS). Threonine 717 is modified (phosphothreonine). A compositionally biased stretch (basic and acidic residues) spans 734 to 749 (SHSEKAHGHGASRKET). 3 positions are modified to phosphoserine: serine 875, serine 901, and serine 927. A compositionally biased stretch (polar residues) spans 875–886 (SPPSTLPRNSPT). Over residues 965–981 (LQPSLSRQSSYTSNGTL) the composition is skewed to polar residues. Residues 965–1017 (LQPSLSRQSSYTSNGTLPRTGLKRTPSLKPDVPPKPSFVPQTPSVRPLNKYTY) are disordered.

Belongs to the semaphorin family.

It is found in the cell membrane. In terms of biological role, shows growth cone collapsing activity on dorsal root ganglion (DRG) neurons in vitro. May be a stop signal for the DRG neurons in their target areas, and possibly also for other neurons. May also be involved in the maintenance and remodeling of neuronal connections. Ligand of TREM2 with PLXNA1 as coreceptor in dendritic cells, plays a role in the generation of immune responses and skeletal homeostasis. This Pongo abelii (Sumatran orangutan) protein is Semaphorin-6D (SEMA6D).